Consider the following 301-residue polypeptide: Glycine--tRNA ligase alpha subunit (301 aa).

This sequence belongs to the class-II aminoacyl-tRNA synthetase family. In terms of assembly, tetramer of two alpha and two beta subunits.

The protein localises to the cytoplasm. The catalysed reaction is tRNA(Gly) + glycine + ATP = glycyl-tRNA(Gly) + AMP + diphosphate. In Variovorax paradoxus (strain S110), this protein is Glycine--tRNA ligase alpha subunit.